The sequence spans 211 residues: Protein-L-isoaspartate O-methyltransferase 2 (211 aa).

The active site involves Ser-60.

It belongs to the methyltransferase superfamily. L-isoaspartyl/D-aspartyl protein methyltransferase family.

The protein localises to the cytoplasm. It catalyses the reaction [protein]-L-isoaspartate + S-adenosyl-L-methionine = [protein]-L-isoaspartate alpha-methyl ester + S-adenosyl-L-homocysteine. Functionally, catalyzes the methyl esterification of L-isoaspartyl residues in peptides and proteins that result from spontaneous decomposition of normal L-aspartyl and L-asparaginyl residues. It plays a role in the repair and/or degradation of damaged proteins. This is Protein-L-isoaspartate O-methyltransferase 2 from Nitrosospira multiformis (strain ATCC 25196 / NCIMB 11849 / C 71).